The sequence spans 170 residues: Probable chemoreceptor glutamine deamidase CheD 3 (170 aa).

The protein belongs to the CheD family.

The enzyme catalyses L-glutaminyl-[protein] + H2O = L-glutamyl-[protein] + NH4(+). Probably deamidates glutamine residues to glutamate on methyl-accepting chemotaxis receptors (MCPs), playing an important role in chemotaxis. The polypeptide is Probable chemoreceptor glutamine deamidase CheD 3 (Dechloromonas aromatica (strain RCB)).